The primary structure comprises 327 residues: Sugar transporter ERD6-like 9 (327 aa).

Helical transmembrane passes span 26–46 (FLVFTTFIIVSASFSFGVALG), 68–88 (VFGSLLTFGGMIGALFSATIA), 102–122 (VFCISGWLAIALAKNIIWLDL), 125–145 (FFVGIGVGLLSYVVPVYIAEI), 152–172 (GTFTFSNQLLQNCGVATAYYL), 180–200 (IIALIGILPCLIQLVGLFFVP), 260–280 (LTIGIGLMLLQQLSGSAGLGY), and 295–315 (IGMTVLSIVVVPKAILGLILV).

Belongs to the major facilitator superfamily. Sugar transporter (TC 2.A.1.1) family.

The protein localises to the membrane. Functionally, sugar transporter. In Arabidopsis thaliana (Mouse-ear cress), this protein is Sugar transporter ERD6-like 9.